The primary structure comprises 67 residues: Small ribosomal subunit protein bS21 (67 aa).

The protein belongs to the bacterial ribosomal protein bS21 family.

The chain is Small ribosomal subunit protein bS21 from Nitratidesulfovibrio vulgaris (strain DP4) (Desulfovibrio vulgaris).